Here is a 444-residue protein sequence, read N- to C-terminus: NADH-quinone oxidoreductase subunit F (444 aa).

NAD(+) is bound at residue 62–71; sequence GRGGAGFLTG. 177 to 224 contributes to the FMN binding site; sequence GAGRYICGEETALINSLEGRRANPRFKPPFPAYVGLWGKPTCVNNVET. [4Fe-4S] cluster is bound by residues C354, C357, C360, and C401.

The protein belongs to the complex I 51 kDa subunit family. Composed of 13 different subunits. Subunits NuoCD, E, F, and G constitute the peripheral sector of the complex. It depends on [4Fe-4S] cluster as a cofactor. FMN serves as cofactor.

It carries out the reaction a quinone + NADH + 5 H(+)(in) = a quinol + NAD(+) + 4 H(+)(out). Its function is as follows. NDH-1 shuttles electrons from NADH, via FMN and iron-sulfur (Fe-S) centers, to quinones in the respiratory chain. Couples the redox reaction to proton translocation (for every two electrons transferred, four hydrogen ions are translocated across the cytoplasmic membrane), and thus conserves the redox energy in a proton gradient. This chain is NADH-quinone oxidoreductase subunit F (nuoF), found in Buchnera aphidicola subsp. Baizongia pistaciae (strain Bp).